We begin with the raw amino-acid sequence, 87 residues long: uncharacterized protein (87 aa).

The chain crosses the membrane as a helical span at residues 42-62 (LADALYSAGSAAFTIAASLVA).

The protein belongs to the SPP1 holin family.

It is found in the membrane. This is an uncharacterized protein from Bacillus licheniformis.